We begin with the raw amino-acid sequence, 688 residues long: Hid-1 family protein P19A11.07c (688 aa).

Belongs to the hid-1 family.

The protein resides in the cytoplasm. Its subcellular location is the nucleus. In Schizosaccharomyces pombe (strain 972 / ATCC 24843) (Fission yeast), this protein is Hid-1 family protein P19A11.07c.